Here is a 155-residue protein sequence, read N- to C-terminus: MSGMNQVVATCWTCLLLSAFLCEPVLSKGGRGGSRGSSRGSHSRSPKAGGYRGGGPHNGGTRGSRYRGRSSPVRVASAAAAGAAVALTADKWYASAYRRSKADGSDEELDYYNRTNYFDAQMSSSTQNGSSLSQLVSIIIATFSPKYGLLMDSIL.

An N-terminal signal peptide occupies residues 1–27; it reads MSGMNQVVATCWTCLLLSAFLCEPVLS. Residues 29 to 71 form a disordered region; that stretch reads GGRGGSRGSSRGSHSRSPKAGGYRGGGPHNGGTRGSRYRGRSS. Residues 50 to 62 are compositionally biased toward gly residues; the sequence is GYRGGGPHNGGTR. N-linked (GlcNAc...) asparagine glycosylation occurs at Asn113. Ser125 carries the GPI-anchor amidated serine lipid modification. Residues 126-155 constitute a propeptide, removed in mature form; it reads TQNGSSLSQLVSIIIATFSPKYGLLMDSIL. Residue Asn128 is glycosylated (N-linked (GlcNAc...) asparagine).

This sequence belongs to the SPRN family.

The protein resides in the cell membrane. Prion-like protein that has PrP(C)-like neuroprotective activity. This Gasterosteus aculeatus (Three-spined stickleback) protein is Shadow of prion protein (sprn).